A 163-amino-acid polypeptide reads, in one-letter code: ATP synthase subunit b 1 (163 aa).

A helical transmembrane segment spans residues 5–25 (FDATFFAFVGLILFLALVVYL).

It belongs to the ATPase B chain family. In terms of assembly, F-type ATPases have 2 components, F(1) - the catalytic core - and F(0) - the membrane proton channel. F(1) has five subunits: alpha(3), beta(3), gamma(1), delta(1), epsilon(1). F(0) has three main subunits: a(1), b(2) and c(10-14). The alpha and beta chains form an alternating ring which encloses part of the gamma chain. F(1) is attached to F(0) by a central stalk formed by the gamma and epsilon chains, while a peripheral stalk is formed by the delta and b chains.

The protein resides in the cell inner membrane. Its function is as follows. F(1)F(0) ATP synthase produces ATP from ADP in the presence of a proton or sodium gradient. F-type ATPases consist of two structural domains, F(1) containing the extramembraneous catalytic core and F(0) containing the membrane proton channel, linked together by a central stalk and a peripheral stalk. During catalysis, ATP synthesis in the catalytic domain of F(1) is coupled via a rotary mechanism of the central stalk subunits to proton translocation. In terms of biological role, component of the F(0) channel, it forms part of the peripheral stalk, linking F(1) to F(0). In Rhizobium etli (strain ATCC 51251 / DSM 11541 / JCM 21823 / NBRC 15573 / CFN 42), this protein is ATP synthase subunit b 1.